A 526-amino-acid chain; its full sequence is Beta,beta-carotene 15,15'-dioxygenase (526 aa).

Histidine 172, histidine 236, histidine 307, and histidine 512 together coordinate Fe cation.

This sequence belongs to the carotenoid oxygenase family. Fe(2+) is required as a cofactor.

Its subcellular location is the cytoplasm. The protein resides in the cytosol. It carries out the reaction all-trans-beta-carotene + O2 = 2 all-trans-retinal. It functions in the pathway cofactor metabolism; retinol metabolism. Its function is as follows. Symmetrically cleaves beta-carotene into two molecules of retinal using a dioxygenase mechanism. In Gallus gallus (Chicken), this protein is Beta,beta-carotene 15,15'-dioxygenase.